We begin with the raw amino-acid sequence, 398 residues long: Acetate kinase (398 aa).

Position 9 (asparagine 9) interacts with Mg(2+). Position 16 (lysine 16) interacts with ATP. Arginine 93 is a substrate binding site. The active-site Proton donor/acceptor is the aspartate 150. ATP-binding positions include 209–213, 284–286, and 329–333; these read HLGAG, DMR, and GIGEH. Glutamate 382 contributes to the Mg(2+) binding site.

The protein belongs to the acetokinase family. Homodimer. Mg(2+) serves as cofactor. The cofactor is Mn(2+).

Its subcellular location is the cytoplasm. It catalyses the reaction acetate + ATP = acetyl phosphate + ADP. The protein operates within metabolic intermediate biosynthesis; acetyl-CoA biosynthesis; acetyl-CoA from acetate: step 1/2. Its function is as follows. Catalyzes the formation of acetyl phosphate from acetate and ATP. Can also catalyze the reverse reaction. This chain is Acetate kinase, found in Rhodopseudomonas palustris (strain ATCC BAA-98 / CGA009).